Here is a 280-residue protein sequence, read N- to C-terminus: Coiled-coil domain-containing protein 106 (280 aa).

Residues 63 to 101 (TQLHMALERNSWLQKRIEDLEEERDFLRCQLDKFISSAR) are a coiled coil. Basic and acidic residues predominate over residues 103-121 (EAEDHCRMKPGPRRMEGDS). Residues 103-176 (EAEDHCRMKP…KPKARERQRV (74 aa)) form a disordered region. At Ser130 the chain carries Phosphoserine. A compositionally biased stretch (low complexity) spans 133 to 146 (ESAASSLSGASEEG). Residues 151–164 (RRRQKQKGGASRRR) carry the Bipartite nuclear localization signal motif. The segment covering 152 to 168 (RRQKQKGGASRRRFGKP) has biased composition (basic residues).

In terms of assembly, interacts with p53/TP53.

It localises to the nucleus. Promotes the degradation of p53/TP53 protein and inhibits its transactivity. The sequence is that of Coiled-coil domain-containing protein 106 (CCDC106) from Homo sapiens (Human).